A 520-amino-acid chain; its full sequence is AAA-ATPase At5g57480 (520 aa).

The first 24 residues, 1–24, serve as a signal peptide directing secretion; that stretch reads MKEYWTSLASLLGVLAFCQSLMQS. 244–251 is an ATP binding site; sequence GPPGTGKS. Disordered stretches follow at residues 307–340 and 467–520; these read KKNS…EEGG and NVKD…TRED. The segment covering 328–340 has biased composition (gly residues); that stretch reads SGSGSGGSGEEGG. Residues 497–512 show a composition bias toward acidic residues; that stretch reads QNEDEDHDEEEIELED.

The protein belongs to the AAA ATPase family. BCS1 subfamily. Mg(2+) is required as a cofactor.

The enzyme catalyses ATP + H2O = ADP + phosphate + H(+). This Arabidopsis thaliana (Mouse-ear cress) protein is AAA-ATPase At5g57480.